The chain runs to 284 residues: UPF0354 protein SERP1303 (284 aa).

Belongs to the UPF0354 family.

The chain is UPF0354 protein SERP1303 from Staphylococcus epidermidis (strain ATCC 35984 / DSM 28319 / BCRC 17069 / CCUG 31568 / BM 3577 / RP62A).